The following is a 258-amino-acid chain: Peptidase inhibitor 15 (258 aa).

The first 19 residues, 1 to 19 (MIAISAVSSALLFSLLCEA), serve as a signal peptide directing secretion. Residues 20 to 60 (STVVLLNSTDSSPPTNNFTDIEAALKAQLDSADIPKARRKR) constitute a propeptide that is removed on maturation. Residues asparagine 26, asparagine 36, and asparagine 124 are each glycosylated (N-linked (GlcNAc...) asparagine). The SCP domain maps to 71 to 211 (LDYHNQVRGK…RRAVYLVCNY (141 aa)).

Belongs to the CRISP family. Post-translationally, N-glycosylated. In terms of tissue distribution, weakly expressed. Expressed at low level in prostate, mammary gland, salivary gland and thyroid gland.

The protein localises to the secreted. Serine protease inhibitor which displays weak inhibitory activity against trypsin. May play a role in facial patterning during embryonic development. The sequence is that of Peptidase inhibitor 15 (PI15) from Homo sapiens (Human).